Reading from the N-terminus, the 466-residue chain is SVGFKAGVKDYKLTYYTPEYETKPTDILAAFRVTPQPGVPPEEAGAAVAAESSTGTWTTVWTDGLTSLDRYKGRCYHIEPVAGEESQFIAYVAYPLDLFEEGSVTNMFTSIVGNVFGFKALRALRLEDLRIPPAYTKTFQGPPHGIQVERDKLNKYGRPLLGCTIKPKLGLSAKNYGRAVYECLRGGLDFTKDDENVNSQPFMRWRDRFLFCAEAIFKSQAETGEIKGHYLNATAGTCEEMMKRAIFARELGVPIVMHDYLTGGFTANTSLAQYCRDNGLLLHIHRAMHAVIDRQKNHGMHFRVLAKALRMSGGDHIHAGTVVGKLEGEREITLGFVDLLRDDFVEKDRSRGIYFTQDWVSLPGVLPVASGGIHVWHMPALTEIFGDDSVLQFGGGTLGHPWGNAPGAVANRVALEACVQARNEGRDLAREGNEIIRAASKWSPELAAACEVWKEIKFEFPAMDTL.

Lys5 carries the post-translational modification N6,N6,N6-trimethyllysine. Positions 114 and 164 each coordinate substrate. Catalysis depends on Lys166, which acts as the Proton acceptor. Lys168 lines the substrate pocket. Positions 192, 194, and 195 each coordinate Mg(2+). At Lys192 the chain carries N6-carboxylysine. The Proton acceptor role is filled by His285. Positions 286, 318, and 370 each coordinate substrate.

The protein belongs to the RuBisCO large chain family. Type I subfamily. Heterohexadecamer of 8 large chains and 8 small chains; disulfide-linked. The disulfide link is formed within the large subunit homodimers. Mg(2+) serves as cofactor. Post-translationally, the disulfide bond which can form in the large chain dimeric partners within the hexadecamer appears to be associated with oxidative stress and protein turnover.

It is found in the plastid. The protein localises to the chloroplast. The catalysed reaction is 2 (2R)-3-phosphoglycerate + 2 H(+) = D-ribulose 1,5-bisphosphate + CO2 + H2O. The enzyme catalyses D-ribulose 1,5-bisphosphate + O2 = 2-phosphoglycolate + (2R)-3-phosphoglycerate + 2 H(+). In terms of biological role, ruBisCO catalyzes two reactions: the carboxylation of D-ribulose 1,5-bisphosphate, the primary event in carbon dioxide fixation, as well as the oxidative fragmentation of the pentose substrate in the photorespiration process. Both reactions occur simultaneously and in competition at the same active site. This chain is Ribulose bisphosphate carboxylase large chain, found in Vitis aestivalis (Grape).